Reading from the N-terminus, the 184-residue chain is MATGPRYKVPMRRRREVRTDYHQRLRLLKSGKPRLVARVSNKHVRAQLVTPGPQGDETHAAATSADLDEYGWEAPTGNLPSAYLTGYLAGKRALAAGVEKAVLDIGLNTATPGNKVFAVQEGAIDAGLEIPHNDAVLADWDRNRGVHIAEYAEQLDEPLYSGEFDATNLPDHFDEVLGNLQEDE.

The protein belongs to the universal ribosomal protein uL18 family. In terms of assembly, part of the 50S ribosomal subunit. Contacts the 5S and 23S rRNAs.

Functionally, this is one of the proteins that bind and probably mediate the attachment of the 5S RNA into the large ribosomal subunit, where it forms part of the central protuberance. The sequence is that of Large ribosomal subunit protein uL18 (rpl18) from Haloferax volcanii (strain ATCC 29605 / DSM 3757 / JCM 8879 / NBRC 14742 / NCIMB 2012 / VKM B-1768 / DS2) (Halobacterium volcanii).